We begin with the raw amino-acid sequence, 274 residues long: 16S rRNA (guanine(1405)-N(7))-methyltransferase (274 aa).

Residues Phe-64, 102-104 (HVS), Arg-108, Ala-133, Asp-156, 182-183 (DL), Leu-198, and Gln-207 each bind S-adenosyl-L-methionine.

The protein belongs to the methyltransferase superfamily. Aminoglycoside resistance family.

The enzyme catalyses guanosine(1405) in 16S rRNA + S-adenosyl-L-methionine = N(7)-methylguanosine(1405) in 16S rRNA + S-adenosyl-L-homocysteine. Specifically methylates the N(7) position of guanine 1405 in 16S rRNA. Confers resistance to various aminoglycosides, including gentamicin and kanamycin. The sequence is that of 16S rRNA (guanine(1405)-N(7))-methyltransferase (grm) from Micromonospora echinospora (Micromonospora purpurea).